A 200-amino-acid chain; its full sequence is Dephospho-CoA kinase (200 aa).

A DPCK domain is found at 4 to 200; the sequence is TIGLTGSVAT…TFIKRFVKNK (197 aa). Position 12 to 17 (12 to 17) interacts with ATP; that stretch reads ATGKST.

The protein belongs to the CoaE family.

Its subcellular location is the cytoplasm. The catalysed reaction is 3'-dephospho-CoA + ATP = ADP + CoA + H(+). The protein operates within cofactor biosynthesis; coenzyme A biosynthesis; CoA from (R)-pantothenate: step 5/5. Catalyzes the phosphorylation of the 3'-hydroxyl group of dephosphocoenzyme A to form coenzyme A. This is Dephospho-CoA kinase from Listeria monocytogenes serotype 4b (strain F2365).